We begin with the raw amino-acid sequence, 365 residues long: DNA replication and repair protein RecF (365 aa).

30-37 is a binding site for ATP; sequence GPNGSGKT.

It belongs to the RecF family.

It localises to the cytoplasm. Functionally, the RecF protein is involved in DNA metabolism; it is required for DNA replication and normal SOS inducibility. RecF binds preferentially to single-stranded, linear DNA. It also seems to bind ATP. The chain is DNA replication and repair protein RecF from Azotobacter vinelandii (strain DJ / ATCC BAA-1303).